Here is a 1526-residue protein sequence, read N- to C-terminus: High affinity cGMP-specific 3',5'-cyclic phosphodiesterase 9A (1526 aa).

Positions 1–43 (MYQDSGCSSSSSRRGSSSAAAATSTAATAAETAAAAAATTTSS) are enriched in low complexity. Disordered regions lie at residues 1–48 (MYQD…DEET), 266–348 (SSRS…SGTA), and 393–476 (RHHH…ASDC). 2 stretches are compositionally biased toward basic and acidic residues: residues 270-282 (RSSELEDDHHEQD) and 305-314 (EHPSEKPERT). 2 stretches are compositionally biased toward low complexity: residues 324-348 (IAVTTTTTATVRRKSSSSSTISGTA) and 401-440 (QQHQQQQRITNNNNNNNNCNSIQNNNNMSNPAATAAATAT). The segment covering 441–462 (PSVEQPATSGTTNIHLQPTSLP) has biased composition (polar residues). One can recognise a PDEase domain in the interval 664–985 (VKRRFLEICD…EYYRRLNDAQ (322 aa)). Catalysis depends on histidine 740, which acts as the Proton donor. 740-744 (HNFRH) provides a ligand contact to 3',5'-cyclic GMP. 4 residues coordinate Zn(2+): histidine 744, histidine 780, aspartate 781, and aspartate 890. The 3',5'-cyclic GMP site is built by aspartate 781 and aspartate 890. Aspartate 781 provides a ligand contact to Mg(2+). Disordered stretches follow at residues 986-1170 (TKTR…SSGG), 1265-1284 (TEADSDGEGDGNGREDKKIP), 1314-1351 (SNGSTRSSASSGRGGSGVPGGSGGSGMPGPSAGSGSSW), 1372-1406 (RFGSTRSSPCPGSNSSSGRTNNNANGLGENQDGLG), and 1469-1496 (RYSSNDSSRHPSNNTLQSAGGGAGLTTG). Positions 993–1005 (ADSNTSATSDSNS) are enriched in low complexity. A compositionally biased stretch (gly residues) spans 1033–1057 (NSQGSGGGGGGGGGGGAGGGTGSGC). The span at 1065-1093 (VSPQMPRSGSGISVKSRRSIPSQKSASRT) shows a compositional bias: polar residues. Basic and acidic residues predominate over residues 1125 to 1136 (VAEKTSKFKVDT). The span at 1139 to 1148 (SSNRSKSSHS) shows a compositional bias: low complexity. Over residues 1314 to 1324 (SNGSTRSSASS) the composition is skewed to low complexity. The segment covering 1325 to 1340 (GRGGSGVPGGSGGSGM) has biased composition (gly residues). Low complexity-rich tracts occupy residues 1341–1350 (PGPSAGSGSS) and 1375–1397 (STRSSPCPGSNSSSGRTNNNANG). Positions 1470–1486 (YSSNDSSRHPSNNTLQS) are enriched in polar residues.

It belongs to the cyclic nucleotide phosphodiesterase family. PDE9 subfamily. Zn(2+) is required as a cofactor. Requires Mg(2+) as cofactor. As to expression, expressed in Malpighian tubules and adult fly head.

It carries out the reaction 3',5'-cyclic GMP + H2O = GMP + H(+). It functions in the pathway purine metabolism; 3',5'-cyclic GMP degradation; GMP from 3',5'-cyclic GMP: step 1/1. Specifically hydrolyzes the second messenger cGMP, which is a key regulator of many important physiological processes. Highly specific: compared to other members of the cyclic nucleotide phosphodiesterase family, has the highest affinity and selectivity for cGMP. This chain is High affinity cGMP-specific 3',5'-cyclic phosphodiesterase 9A, found in Drosophila melanogaster (Fruit fly).